Reading from the N-terminus, the 924-residue chain is Isoleucine--tRNA ligase (924 aa).

Residues 57-67 (PYANGDIHMGH) carry the 'HIGH' region motif. Glu552 is an L-isoleucyl-5'-AMP binding site. The short motif at 593–597 (KMSKS) is the 'KMSKS' region element. Lys596 contacts ATP. Cys891, Cys894, Cys911, and Cys914 together coordinate Zn(2+).

It belongs to the class-I aminoacyl-tRNA synthetase family. IleS type 1 subfamily. Monomer. Zn(2+) serves as cofactor.

It is found in the cytoplasm. The enzyme catalyses tRNA(Ile) + L-isoleucine + ATP = L-isoleucyl-tRNA(Ile) + AMP + diphosphate. Functionally, catalyzes the attachment of isoleucine to tRNA(Ile). As IleRS can inadvertently accommodate and process structurally similar amino acids such as valine, to avoid such errors it has two additional distinct tRNA(Ile)-dependent editing activities. One activity is designated as 'pretransfer' editing and involves the hydrolysis of activated Val-AMP. The other activity is designated 'posttransfer' editing and involves deacylation of mischarged Val-tRNA(Ile). In Geobacillus kaustophilus (strain HTA426), this protein is Isoleucine--tRNA ligase.